The sequence spans 313 residues: Nucleoside diphosphate-linked moiety X motif 6 (313 aa).

The Nudix hydrolase domain maps to 138–270 (THQVGVAGAV…TSRVARLLLY (133 aa)).

The protein belongs to the Nudix hydrolase family. In terms of assembly, monomer and homodimer.

It localises to the cytoplasm. The protein resides in the nucleus. It is found in the mitochondrion. Functionally, may contribute to the regulation of cell proliferation. This chain is Nucleoside diphosphate-linked moiety X motif 6 (Nudt6), found in Mus musculus (Mouse).